A 478-amino-acid polypeptide reads, in one-letter code: Proline--tRNA ligase (478 aa).

The protein belongs to the class-II aminoacyl-tRNA synthetase family. ProS type 3 subfamily. As to quaternary structure, homodimer.

It is found in the cytoplasm. The enzyme catalyses tRNA(Pro) + L-proline + ATP = L-prolyl-tRNA(Pro) + AMP + diphosphate. Catalyzes the attachment of proline to tRNA(Pro) in a two-step reaction: proline is first activated by ATP to form Pro-AMP and then transferred to the acceptor end of tRNA(Pro). The polypeptide is Proline--tRNA ligase (Clostridium botulinum (strain Kyoto / Type A2)).